A 462-amino-acid polypeptide reads, in one-letter code: Chromosomal replication initiator protein DnaA (462 aa).

Residues 1 to 84 (MAVSLWQQCI…RFDIGSRPSA (84 aa)) are domain I, interacts with DnaA modulators. A domain II region spans residues 84–125 (APRPVQATAAVERPKFEQNTKPAKTSFNVNSPEPAMAANHRS). A domain III, AAA+ region region spans residues 126-342 (NINRTYQFEN…GALNRVIANA (217 aa)). Residues Gly-170, Gly-172, Lys-173, and Thr-174 each coordinate ATP. The segment at 343–462 (NFTGRPITID…YANLIRTLSS (120 aa)) is domain IV, binds dsDNA.

The protein belongs to the DnaA family. Oligomerizes as a right-handed, spiral filament on DNA at oriC.

It localises to the cytoplasm. Plays an essential role in the initiation and regulation of chromosomal replication. ATP-DnaA binds to the origin of replication (oriC) to initiate formation of the DNA replication initiation complex once per cell cycle. Binds the DnaA box (a 9 base pair repeat at the origin) and separates the double-stranded (ds)DNA. Forms a right-handed helical filament on oriC DNA; dsDNA binds to the exterior of the filament while single-stranded (ss)DNA is stabiized in the filament's interior. The ATP-DnaA-oriC complex binds and stabilizes one strand of the AT-rich DNA unwinding element (DUE), permitting loading of DNA polymerase. After initiation quickly degrades to an ADP-DnaA complex that is not apt for DNA replication. Binds acidic phospholipids. The chain is Chromosomal replication initiator protein DnaA from Shewanella sediminis (strain HAW-EB3).